The sequence spans 335 residues: Transmembrane protein 120B-A (335 aa).

Residues 1-40 (MSLQKCQEEWSEIEKEFQQLQETHKVYKQKLEELNSLQNL) adopt a coiled-coil conformation. Transmembrane regions (helical) follow at residues 100 to 122 (GLYLNLVLGNVNVTLLSTQAKFA), 130 to 150 (FKLYLTIILLLGAITCRFVLN), 157 to 177 (VFNFLLVWYYCTLTIRESILI), 193 to 213 (VSTFLSGVMLTWPDGLMYQIF), 268 to 288 (FLLPFLFFGHFWQLYNAITLF), and 300 to 320 (QVFVLALTFLLLFLGNFLTTL).

Belongs to the TMEM120 family.

Its subcellular location is the nucleus inner membrane. Functionally, necessary for efficient adipogenesis. Does not show ion channel activity. This Xenopus laevis (African clawed frog) protein is Transmembrane protein 120B-A (tmem120b-a).